Reading from the N-terminus, the 524-residue chain is Glutamyl-tRNA(Gln) amidotransferase subunit A, mitochondrial (524 aa).

The active-site Charge relay system is K76. A disordered region spans residues 146–168 (KQYRGKGSPDSSQEDQEPQWLVA). S171 serves as the catalytic Charge relay system. S195 functions as the Acyl-ester intermediate in the catalytic mechanism.

The protein belongs to the amidase family. GatA subfamily. In terms of assembly, subunit of the heterotrimeric GatCAB amidotransferase (AdT) complex, composed of A (QRSL1), B (GATB) and C (GATC) subunits.

Its subcellular location is the mitochondrion. It carries out the reaction L-glutamyl-tRNA(Gln) + L-glutamine + ATP + H2O = L-glutaminyl-tRNA(Gln) + L-glutamate + ADP + phosphate + H(+). Allows the formation of correctly charged Gln-tRNA(Gln) through the transamidation of misacylated Glu-tRNA(Gln) in the mitochondria. The reaction takes place in the presence of glutamine and ATP through an activated gamma-phospho-Glu-tRNA(Gln). This is Glutamyl-tRNA(Gln) amidotransferase subunit A, mitochondrial from Ornithorhynchus anatinus (Duckbill platypus).